The primary structure comprises 539 residues: Kynureninase 2 (539 aa).

The tract at residues 60–87 (DGGVAGETKEPRVPNGVSSATKPNGTVN) is disordered. The segment covering 75 to 87 (GVSSATKPNGTVN) has biased composition (polar residues). Residues L171, T172, 199 to 202 (FPSD), D290, H293, and Y315 each bind pyridoxal 5'-phosphate. K316 carries the N6-(pyridoxal phosphate)lysine modification. Gly residues predominate over residues 340–352 (GGGGSGGVGGGRG). Positions 340–363 (GGGGSGGVGGGRGEGGDGDGGDGG) are disordered. Residues W379 and N407 each coordinate pyridoxal 5'-phosphate.

This sequence belongs to the kynureninase family. In terms of assembly, homodimer. Pyridoxal 5'-phosphate is required as a cofactor.

The protein resides in the cytoplasm. The catalysed reaction is L-kynurenine + H2O = anthranilate + L-alanine + H(+). It catalyses the reaction 3-hydroxy-L-kynurenine + H2O = 3-hydroxyanthranilate + L-alanine + H(+). It functions in the pathway amino-acid degradation; L-kynurenine degradation; L-alanine and anthranilate from L-kynurenine: step 1/1. The protein operates within cofactor biosynthesis; NAD(+) biosynthesis; quinolinate from L-kynurenine: step 2/3. In terms of biological role, catalyzes the cleavage of L-kynurenine (L-Kyn) and L-3-hydroxykynurenine (L-3OHKyn) into anthranilic acid (AA) and 3-hydroxyanthranilic acid (3-OHAA), respectively. This Chaetomium globosum (strain ATCC 6205 / CBS 148.51 / DSM 1962 / NBRC 6347 / NRRL 1970) (Soil fungus) protein is Kynureninase 2.